Consider the following 367-residue polypeptide: Pectate lyase 1 (367 aa).

Positions methionine 1–serine 21 are cleaved as a signal peptide. Cysteine 28 and cysteine 45 are oxidised to a cystine. Positions asparagine 38–glycine 305 are beta-helix. Residues isoleucine 92 to proline 104 are igE-binding. Binds to IgE in 5 out of 7 patients tested. The cysteines at positions 128 and 147 are disulfide-linked. The N-linked (GlcNAc...) asparagine glycan is linked to asparagine 148. Aspartate 170 contributes to the Ca(2+) binding site. A glycan (N-linked (GlcNAc...) asparagine) is linked at asparagine 178. The Ca(2+) site is built by aspartate 194 and aspartate 198. Residues alanine 239 to arginine 250 are igE-binding. Binds to IgE in 6 out of 7 patients tested. The active site involves arginine 250. An igE-binding. Binds to IgE in 5 out of 7 patients tested region spans residues methionine 251–leucine 258. Residues cysteine 306 and cysteine 312 are joined by a disulfide bond. An igE-binding. Binds to IgE in 3 out of 7 patients tested region spans residues tryptophan 317–glycine 327.

This sequence belongs to the polysaccharide lyase 1 family. Amb a subfamily. Ca(2+) serves as cofactor. Post-translationally, N-glycosylated; consists of complex-type N-glycans containing the Lewis a antigen (Galbeta1-3(Fucalpha1-4)GlcNAcbeta1-). Expressed in pollen (at protein level).

It catalyses the reaction Eliminative cleavage of (1-&gt;4)-alpha-D-galacturonan to give oligosaccharides with 4-deoxy-alpha-D-galact-4-enuronosyl groups at their non-reducing ends.. The protein operates within glycan metabolism; pectin degradation; 2-dehydro-3-deoxy-D-gluconate from pectin: step 2/5. Functionally, has low pectate lyase activity. This Juniperus ashei (Ozark white cedar) protein is Pectate lyase 1.